Consider the following 700-residue polypeptide: MKKNLIIVESPAKAKTIGNFLGKDYEVIASKGHIRDLPKSSFGIKIEDDEFIPEYRITSDHSALVKELKSKAKDAKEVYLATDEDREGEAIAYHIAKAIGKDENTLPRIVFHEITKSAIENALKNPRKLNMHSVNAQQTRRLLDRIVGYKLSPLLGQKIQRGLSAGRVQSAALKIIVDREKEIRAFVPLEYFSIDMIFQKDLDAELVEFDKAKIEKLTITNKDRAKLILEACKNEVYSISDIESKERKIAPPPPFMTSTLQQSASNRLGFNPKKTMMIAQKLYEGVNTHEGVMGVITYMRTDSLNLAKEAVENARKFIQANFGKDYLPSKANVYTTKTKGAQEAHEAIRPTNLSFTPEIAAKFLDKDELKLYTLIYNRFLACQMSPAISQTQNVFVKNDRVVFKISGRKILFDGYYKVYGDMDKDKILPNFKIGQNLKVQNLEMNSHFTEPPSRYSEAGLVKKLESLGIGRPSTYAPTISILTSRDYVTIDKKQLIPSDVAFNVTEVLEKNFSDIVDSKFTSNLENTLDEIAEDKADWQETLKEFYYPFMRKIEEGKTKIASQKTVTKLGESCPDCGGELAIRKGRFGEFVACLNFPKCKYSRNLKSESKNESENTAAKAKANGTGITCPSCQKGEIVERFSKRGKFYGCSAYPKCNFISKYKPSEEKCEECGETLVIKELKKGTFLECLKCKIKKEMKD.

The 112-residue stretch at 3-114 folds into the Toprim domain; that stretch reads KNLIIVESPA…TLPRIVFHEI (112 aa). Mg(2+) contacts are provided by Glu-9 and Asp-83. A Topo IA-type catalytic domain is found at 130–553; sequence NMHSVNAQQT…EFYYPFMRKI (424 aa). The segment at 164 to 169 is interaction with DNA; sequence SAGRVQ. The active-site O-(5'-phospho-DNA)-tyrosine intermediate is Tyr-298. 3 C4-type zinc fingers span residues 573–599, 629–656, and 669–692; these read CPDCGGELAIRKGRFGEFVACLNFPKC, CPSCQKGEIVERFSKRGKFYGCSAYPKC, and CEECGETLVIKELKKGTFLECLKC.

It belongs to the type IA topoisomerase family. As to quaternary structure, monomer. The cofactor is Mg(2+).

The enzyme catalyses ATP-independent breakage of single-stranded DNA, followed by passage and rejoining.. In terms of biological role, releases the supercoiling and torsional tension of DNA, which is introduced during the DNA replication and transcription, by transiently cleaving and rejoining one strand of the DNA duplex. Introduces a single-strand break via transesterification at a target site in duplex DNA. The scissile phosphodiester is attacked by the catalytic tyrosine of the enzyme, resulting in the formation of a DNA-(5'-phosphotyrosyl)-enzyme intermediate and the expulsion of a 3'-OH DNA strand. The free DNA strand then undergoes passage around the unbroken strand, thus removing DNA supercoils. Finally, in the religation step, the DNA 3'-OH attacks the covalent intermediate to expel the active-site tyrosine and restore the DNA phosphodiester backbone. This chain is DNA topoisomerase 1, found in Campylobacter jejuni subsp. jejuni serotype O:2 (strain ATCC 700819 / NCTC 11168).